The sequence spans 83 residues: Cell division topological specificity factor (83 aa).

The protein belongs to the MinE family.

Functionally, prevents the cell division inhibition by proteins MinC and MinD at internal division sites while permitting inhibition at polar sites. This ensures cell division at the proper site by restricting the formation of a division septum at the midpoint of the long axis of the cell. This Marinobacter nauticus (strain ATCC 700491 / DSM 11845 / VT8) (Marinobacter aquaeolei) protein is Cell division topological specificity factor.